A 319-amino-acid chain; its full sequence is Acetyl esterase (319 aa).

The Involved in the stabilization of the negatively charged intermediate by the formation of the oxyanion hole motif lies at 91–93 (HGG). Catalysis depends on residues serine 165, aspartate 262, and histidine 292.

It belongs to the 'GDXG' lipolytic enzyme family. Homodimer. Interacts with MalT and MelA.

Its subcellular location is the cytoplasm. Displays esterase activity towards short chain fatty esters (acyl chain length of up to 8 carbons). Able to hydrolyze triacetylglycerol (triacetin) and tributyrylglycerol (tributyrin), but not trioleylglycerol (triolein) or cholesterol oleate. Negatively regulates MalT activity by antagonizing maltotriose binding. Inhibits MelA galactosidase activity. The polypeptide is Acetyl esterase (Escherichia coli O8 (strain IAI1)).